We begin with the raw amino-acid sequence, 432 residues long: PC-esterase domain-containing protein 1B (432 aa).

2 disordered regions span residues 264 to 293 and 398 to 432; these read EWIKKKKPGPRVEGPPQANRNHPALPLSPP and RGFGRYRPRGPYTPWGQRPRPSKRRAPANPEPRPQ.

It belongs to the PC-esterase family.

This is PC-esterase domain-containing protein 1B from Homo sapiens (Human).